A 765-amino-acid polypeptide reads, in one-letter code: Polyribonucleotide nucleotidyltransferase (765 aa).

Mg(2+) contacts are provided by D556 and D562. A KH domain is found at 622–681; sequence PRITKISIPQNKIGEVIGPKGKTINQITEETGANISIEDDGTVFVSAVGGEAAEAAIEKI. The S1 motif domain occupies 693–762; sequence GDRFLGTVVK…NRGKISLVPV (70 aa).

This sequence belongs to the polyribonucleotide nucleotidyltransferase family. The cofactor is Mg(2+).

Its subcellular location is the cytoplasm. The catalysed reaction is RNA(n+1) + phosphate = RNA(n) + a ribonucleoside 5'-diphosphate. In terms of biological role, involved in mRNA degradation. Catalyzes the phosphorolysis of single-stranded polyribonucleotides processively in the 3'- to 5'-direction. The protein is Polyribonucleotide nucleotidyltransferase of Corynebacterium urealyticum (strain ATCC 43042 / DSM 7109).